Here is a 547-residue protein sequence, read N- to C-terminus: Chaperonin GroEL 3 (547 aa).

ATP is bound by residues 30-33 (TLGP), Lys51, 87-91 (DGTTT), Gly415, and Asp496.

Belongs to the chaperonin (HSP60) family. As to quaternary structure, forms a cylinder of 14 subunits composed of two heptameric rings stacked back-to-back. Interacts with the co-chaperonin GroES.

Its subcellular location is the cytoplasm. The catalysed reaction is ATP + H2O + a folded polypeptide = ADP + phosphate + an unfolded polypeptide.. In terms of biological role, together with its co-chaperonin GroES, plays an essential role in assisting protein folding. The GroEL-GroES system forms a nano-cage that allows encapsulation of the non-native substrate proteins and provides a physical environment optimized to promote and accelerate protein folding. In Bradyrhizobium sp. (strain ORS 278), this protein is Chaperonin GroEL 3.